The following is a 1167-amino-acid chain: MELPFVTHLFLPLVFLTGLCSPFNLDEHHPRLFPGPPEAEFGYSVLQHVGGGQRWMLVGAPWDGPSGDRRGDVYRCPVGGAHNAPCAKGHLGDYQLGNSSHPAVNMHLGMSLLETDGDGGFMACAPLWSRACGSSVFSSGICARVDASFQPQGSLAPTAQRCPTYMDVVIVLDGSNSIYPWSEVQTFLRRLVGKLFIDPEQIQVGLVQYGESPVHEWSLGDFRTKEEVVRAAKNLSRREGRETKTAQAIMVACTEGFSQSHGGRPEAARLLVVVTDGESHDGEELPAALKACEAGRVTRYGIAVLGHYLRRQRDPSSFLREIRTIASDPDERFFFNVTDEAALTDIVDALGDRIFGLEGSHAENESSFGLEMSQIGFSTHRLKDGILFGMVGAYDWGGSVLWLEGGHRLFPPRMALEDEFPPALQNHAAYLGYSVSSMLLRGGRRLFLSGAPRFRHRGKVIAFQLKKDGAVRVAQSLQGEQIGSYFGSELCPLDTDRDGTTDVLLVAAPMFLGPQNKETGRVYVYLVGQQSLLTLQGTLQPEPPQDARFGFAMGALPDLNQDGFADVAVGAPLEDGHQGALYLYHGTQSGVRPHPAQRIAAASMPHALSYFGRSVDGRLDLDGDDLVDVAVGAQGAAILLSSRPIVHLTPSLEVTPQAISVVQRDCRRRGQEAVCLTAALCFQVTSRTPGRWDHQFYMRFTASLDEWTAGARAAFDGSGQRLSPRRLRLSVGNVTCEQLHFHVLDTSDYLRPVALTVTFALDNTTKPGPVLNEGSPTSIQKLVPFSKDCGPDNECVTDLVLQVNMDIRGSRKAPFVVRGGRRKVLVSTTLENRKENAYNTSLSLIFSRNLHLASLTPQRESPIKVECAAPSAHARLCSVGHPVFQTGAKVTFLLEFEFSCSSLLSQVFVKLTASSDSLERNGTLQDNTAQTSAYIQYEPHLLFSSESTLHRYEVHPYGTLPVGPGPEFKTTLRVQNLGCYVVSGLIISALLPAVAHGGNYFLSLSQVITNNASCIVQNLTEPPGPPVHPEELQHTNRLNGSNTQCQVVRCHLGQLAKGTEVSVGLLRLVHNEFFRRAKFKSLTVVSTFELGTEEGSVLQLTEASRWSESLLEVVQTRPILISLWILIGSVLGGLLLLALLVFCLWKLGFFAHKKIPEEEKREEKLEQ.

The first 22 residues, 1-22, serve as a signal peptide directing secretion; it reads MELPFVTHLFLPLVFLTGLCSP. The Extracellular portion of the chain corresponds to 23–1122; the sequence is FNLDEHHPRL…VVQTRPILIS (1100 aa). FG-GAP repeat units follow at residues 24–85 and 95–154; these read NLDE…HNAP and QLGN…PQGS. C76 and C86 form a disulfide bridge. N98, N234, N336, and N364 each carry an N-linked (GlcNAc...) asparagine glycan. The VWFA domain maps to 167 to 350; sequence DVVIVLDGSN…AALTDIVDAL (184 aa). FG-GAP repeat units lie at residues 361–412, 417–470, 472–534, 535–593, and 597–657; these read HAEN…LFPP, EDEF…KDGA, RVAQ…SLLT, LQGT…GVRP, and QRIA…VTPQ. Residues D494, D496, D498, D502, D558, N560, D562, D566, D620, D622, D624, and D628 each coordinate Ca(2+). 2 cysteine pairs are disulfide-bonded: C666–C675 and C681–C736. 2 N-linked (GlcNAc...) asparagine glycosylation sites follow: N733 and N763. C789 and C795 are oxidised to a cystine. N-linked (GlcNAc...) asparagine glycosylation is found at N839, N921, N1011, N1018, and N1039. Residues 1123–1145 form a helical membrane-spanning segment; it reads LWILIGSVLGGLLLLALLVFCLW. The Cytoplasmic portion of the chain corresponds to 1146 to 1167; sequence KLGFFAHKKIPEEEKREEKLEQ.

This sequence belongs to the integrin alpha chain family. As to quaternary structure, heterodimer of an alpha and a beta subunit. Alpha-10 associates with beta-1. In terms of tissue distribution, widely expressed with highest expression in muscle and heart. Found in articular cartilage.

It is found in the membrane. Integrin alpha-10/beta-1 is a receptor for collagen. The sequence is that of Integrin alpha-10 (ITGA10) from Homo sapiens (Human).